The chain runs to 704 residues: Mannan-binding lectin serine protease 1 (704 aa).

The first 24 residues, 1 to 24 (MRFLSFWRLLLYHALCLALPEVSA), serve as a signal peptide directing secretion. Residues 25–143 (HTVELNEMFG…TGFDAHYMAV (119 aa)) enclose the CUB 1 domain. Positions 25 to 189 (HTVELNEMFG…HTDNRTCRVE (165 aa)) are homodimerization. The segment at 25–189 (HTVELNEMFG…HTDNRTCRVE (165 aa)) is interaction with MBL2. An interaction with FCN2 region spans residues 25–283 (HTVELNEMFG…STQTHSVQIL (259 aa)). Residues 25 to 305 (HTVELNEMFG…RLSYRAAGNE (281 aa)) form an interaction with MBL1 region. Asparagine 54 carries an N-linked (GlcNAc...) asparagine glycan. 7 residues coordinate Ca(2+): glutamate 73, aspartate 81, aspartate 126, serine 128, aspartate 144, valine 145, and glutamate 147. Cysteine 78 and cysteine 96 are disulfide-bonded. Positions 144–187 (DVDECKEREDEELSCDHYCHNYIGGYYCSCRFGYILHTDNRTCR) constitute an EGF-like; calcium-binding domain. 4 disulfides stabilise this stretch: cysteine 148–cysteine 162, cysteine 158–cysteine 171, cysteine 173–cysteine 186, and cysteine 190–cysteine 217. Asparagine 164, tyrosine 165, and glycine 168 together coordinate Ca(2+). Asparagine 164 carries the (3R)-3-hydroxyasparagine modification. N-linked (GlcNAc...) asparagine glycosylation is present at asparagine 183. Positions 190–302 (CSGNLFTQRT…RGWRLSYRAA (113 aa)) constitute a CUB 2 domain. Ca(2+)-binding residues include glutamate 240, aspartate 250, aspartate 287, and serine 289. The cysteines at positions 247 and 265 are disulfide-linked. 2 Sushi domains span residues 304–369 (NECP…TCKI) and 370–439 (VDCG…TCLP). 8 cysteine pairs are disulfide-bonded: cysteine 306/cysteine 354, cysteine 334/cysteine 367, cysteine 372/cysteine 419, cysteine 402/cysteine 437, cysteine 441/cysteine 577, cysteine 480/cysteine 496, cysteine 619/cysteine 636, and cysteine 647/cysteine 677. Asparagine 390 and asparagine 412 each carry an N-linked (GlcNAc...) asparagine glycan. The Peptidase S1 domain occupies 454-701 (IFNGRPAQKG…NKDWIQRITG (248 aa)). Active-site charge relay system residues include histidine 495 and aspartate 557. Serine 651 functions as the Charge relay system in the catalytic mechanism.

The protein belongs to the peptidase S1 family. As to quaternary structure, homodimer. Interacts with the oligomeric lectins MBL2, FCN2 and FCN3; triggers the lectin pathway of complement through activation of C3. Interacts with SERPING1. Interacts with COLEC11; probably triggers the lectin pathway of complement. In terms of processing, the iron and 2-oxoglutarate dependent 3-hydroxylation of aspartate and asparagine is (R) stereospecific within EGF domains. N-glycosylated. Some N-linked glycan are of the complex-type. Post-translationally, autoproteolytic processing of the proenzyme produces the active enzyme composed on the heavy and the light chain held together by a disulfide bond. Isoform 1 but not isoform 2 is activated through autoproteolytic processing. As to expression, protein of the plasma which is primarily expressed by liver.

It is found in the secreted. Inhibited by SERPING1 and A2M. Its function is as follows. Functions in the lectin pathway of complement, which performs a key role in innate immunity by recognizing pathogens through patterns of sugar moieties and neutralizing them. The lectin pathway is triggered upon binding of mannan-binding lectin (MBL) and ficolins to sugar moieties which leads to activation of the associated proteases MASP1 and MASP2. Functions as an endopeptidase and may activate MASP2 or C2 or directly activate C3 the key component of complement reaction. Isoform 2 may have an inhibitory effect on the activation of the lectin pathway of complement or may cleave IGFBP5. Also plays a role in development. In Mus musculus (Mouse), this protein is Mannan-binding lectin serine protease 1 (Masp1).